The primary structure comprises 333 residues: DNA-directed RNA polymerase subunit alpha (333 aa).

The segment at 1–251 is alpha N-terminal domain (alpha-NTD); that stretch reads MEKLTKIKHR…AHFQTIGDLT (251 aa). The alpha C-terminal domain (alpha-CTD) stretch occupies residues 272-333; that stretch reads DMEIRLLNLS…KLNEYGKLKN (62 aa).

The protein belongs to the RNA polymerase alpha chain family. As to quaternary structure, homodimer. The RNAP catalytic core consists of 2 alpha, 1 beta, 1 beta' and 1 omega subunit. When a sigma factor is associated with the core the holoenzyme is formed, which can initiate transcription.

The catalysed reaction is RNA(n) + a ribonucleoside 5'-triphosphate = RNA(n+1) + diphosphate. In terms of biological role, DNA-dependent RNA polymerase catalyzes the transcription of DNA into RNA using the four ribonucleoside triphosphates as substrates. In Mycoplasmopsis synoviae (strain 53) (Mycoplasma synoviae), this protein is DNA-directed RNA polymerase subunit alpha.